A 460-amino-acid chain; its full sequence is Cysteine--tRNA ligase (460 aa).

Cys-28 serves as a coordination point for Zn(2+). The short motif at 30 to 40 is the 'HIGH' region element; the sequence is MTVYDYCHLGH. Zn(2+)-binding residues include Cys-209, His-234, and Glu-238. The 'KMSKS' region signature appears at 266-270; sequence KMSKS. ATP is bound at residue Lys-269.

Belongs to the class-I aminoacyl-tRNA synthetase family. Monomer. Zn(2+) serves as cofactor.

It is found in the cytoplasm. It carries out the reaction tRNA(Cys) + L-cysteine + ATP = L-cysteinyl-tRNA(Cys) + AMP + diphosphate. The polypeptide is Cysteine--tRNA ligase (Pseudomonas aeruginosa (strain LESB58)).